The sequence spans 347 residues: Mediator of RNA polymerase II transcription subunit 7 (347 aa).

Disordered regions lie at residues 97-172 and 302-326; these read GIER…TQTH and VPVGARTGTTVGDRRVGVDGEGAEE. Low complexity-rich tracts occupy residues 108–171 and 302–312; these read STTT…STQT and VPVGARTGTTV.

Belongs to the Mediator complex subunit 7 family. Component of the Mediator complex.

Its subcellular location is the nucleus. In terms of biological role, component of the Mediator complex, a coactivator involved in the regulated transcription of nearly all RNA polymerase II-dependent genes. Mediator functions as a bridge to convey information from gene-specific regulatory proteins to the basal RNA polymerase II transcription machinery. Mediator is recruited to promoters by direct interactions with regulatory proteins and serves as a scaffold for the assembly of a functional preinitiation complex with RNA polymerase II and the general transcription factors. The protein is Mediator of RNA polymerase II transcription subunit 7 (med-7) of Neurospora crassa (strain ATCC 24698 / 74-OR23-1A / CBS 708.71 / DSM 1257 / FGSC 987).